A 1039-amino-acid polypeptide reads, in one-letter code: Error-prone DNA polymerase (1039 aa).

It belongs to the DNA polymerase type-C family. DnaE2 subfamily.

It is found in the cytoplasm. It carries out the reaction DNA(n) + a 2'-deoxyribonucleoside 5'-triphosphate = DNA(n+1) + diphosphate. Functionally, DNA polymerase involved in damage-induced mutagenesis and translesion synthesis (TLS). It is not the major replicative DNA polymerase. The chain is Error-prone DNA polymerase from Idiomarina loihiensis (strain ATCC BAA-735 / DSM 15497 / L2-TR).